Reading from the N-terminus, the 117-residue chain is Large ribosomal subunit protein bL20c (117 aa).

It belongs to the bacterial ribosomal protein bL20 family.

Its subcellular location is the plastid. It localises to the chloroplast. Functionally, binds directly to 23S ribosomal RNA and is necessary for the in vitro assembly process of the 50S ribosomal subunit. It is not involved in the protein synthesizing functions of that subunit. The sequence is that of Large ribosomal subunit protein bL20c from Phalaenopsis aphrodite subsp. formosana (Moth orchid).